We begin with the raw amino-acid sequence, 197 residues long: uncharacterized protein (197 aa).

Belongs to the methyltransferase superfamily.

This is an uncharacterized protein from Mycobacterium bovis (strain ATCC BAA-935 / AF2122/97).